The primary structure comprises 894 residues: Peroxisomal hydratase-dehydrogenase-epimerase (894 aa).

Short-chain dehydrogenase like regions lie at residues 6 to 230 and 311 to 523; these read RFDG…HKNN and DFKG…CSDK. Residues Val-14, Lys-53, Asn-99, Arg-132, Tyr-164, Lys-168, and Ala-197 each coordinate NADP(+). Residue Tyr-164 is the Proton acceptor of the active site. Lys-168 acts as the Lowers pKa of active site Tyr in catalysis. The active-site Proton acceptor is the Tyr-458. Positions 693, 694, and 723 each coordinate (3R)-3-hydroxydecanoyl-CoA. Residues 763-782 are disordered; it reads KKPADRGASTAANKPPARSP. The region spanning 776–887 is the MaoC-like domain; sequence KPPARSPDAV…VKETGKLAIS (112 aa). Residues Asp-803, Asn-805, Gly-826, Phe-851, and Gly-853 each coordinate (3R)-3-hydroxydecanoyl-CoA.

It belongs to the short-chain dehydrogenases/reductases (SDR) family. Monomer.

It localises to the peroxisome. The catalysed reaction is a (3R)-3-hydroxyacyl-CoA = a (2E)-enoyl-CoA + H2O. It carries out the reaction a (3R)-3-hydroxyacyl-CoA + NAD(+) = a 3-oxoacyl-CoA + NADH + H(+). The protein operates within lipid metabolism; fatty acid beta-oxidation. Functionally, second trifunctional enzyme acting on the beta-oxidation pathway for fatty acids, possessing hydratase-dehydrogenase-epimerase activities. Converts trans-2-enoyl-CoA via D-3-hydroxyacyl-CoA to 3-ketoacyl-CoA. The polypeptide is Peroxisomal hydratase-dehydrogenase-epimerase (fox-2) (Neurospora crassa (strain ATCC 24698 / 74-OR23-1A / CBS 708.71 / DSM 1257 / FGSC 987)).